The sequence spans 369 residues: Transforming protein Maf (369 aa).

Disordered regions lie at residues 57 to 85 and 169 to 243; these read STPM…TDQK and GGAP…GLHF. Basic residues predominate over residues 173-183; it reads HYHHHHHHPHH. Residues 184 to 193 are compositionally biased toward gly residues; the sequence is GGGGGGGGHP. A compositionally biased stretch (low complexity) spans 194 to 211; it reads HGAAPGSAPPSSASSSAA. Positions 212 to 226 are enriched in gly residues; sequence GSGGGGGGGGGGAGG. The basic motif stretch occupies residues 274 to 299; the sequence is RLKQKRRTLKNRGYAQSCRFKRVQQR. Residues 274–337 form the bZIP domain; the sequence is RLKQKRRTLK…DAYKEKYEKL (64 aa). The interval 302 to 323 is leucine-zipper; that stretch reads LESEKNQLLQQVEHLKQEISRL. A disordered region spans residues 341-369; the sequence is GFRENGSSSDNPSSPEFFMYPRESSTTVM. Residues 345–354 are compositionally biased toward polar residues; the sequence is NGSSSDNPSS.

It belongs to the bZIP family. Maf subfamily.

The protein resides in the host nucleus. Its function is as follows. Might be a transcriptional trans-activator. This is Transforming protein Maf (V-MAF) from Galliformes.